A 488-amino-acid chain; its full sequence is MVRLPYTTALTTLFSYGLLFAFGQLRDFFRKLIDWFKAKNVKGYAPICLGLEDFYVRRLYLRIQDCFGRPIASAPDAWFDVVERYSNDSNKTLKRTSNTTRCLNLGSYNYLGFAAADEYCTPLVIESLKKYSPSTCSVRVDGGTTKLHTELEELVARFVGKPAAILFGMGYVTNSAIIPCLVGKGGLIISDSLNHNSIVNGARGSGATVRVFQHNSPAHLEEVLREQIAGGQPRTHRPWKKIIVIVEGIYSMEGELCKLPEIIAVCKKYKAYTYLDEAHSIGAVGQSGRGVCELLGVDPADVDIMMGTFTKSFGSCGGYIAASKEIIQHLKLSCPAHIYATSMSPPAVQQVISAIKVILGEDGSNRGAQKLARIRENSNFFRSELKKMGFEVLGDNDSPVMPIMLYNPAKIPAFSRECLRQKVAVVTVAFPATPLLLARARICISASHTREDLIKALDVISRVGDLVGIKYFPAEPPKIAEADHDKLE.

Residues 4–24 form a helical membrane-spanning segment; that stretch reads LPYTTALTTLFSYGLLFAFGQ. An N6-(pyridoxal phosphate)lysine modification is found at lysine 311.

This sequence belongs to the class-II pyridoxal-phosphate-dependent aminotransferase family. In terms of assembly, heterodimer with LCB1. Component of the serine palmitoyltransferase (SPT) complex, composed of LCB1 and LCB2. Pyridoxal 5'-phosphate serves as cofactor.

The protein localises to the endoplasmic reticulum membrane. The enzyme catalyses L-serine + hexadecanoyl-CoA + H(+) = 3-oxosphinganine + CO2 + CoA. The protein operates within lipid metabolism; sphingolipid metabolism. Serine palmitoyltransferase (SPT). The heterodimer formed with LCB1 constitutes the catalytic core. This chain is Long chain base biosynthesis protein 2a, found in Oryza sativa subsp. japonica (Rice).